Consider the following 191-residue polypeptide: Potassium-transporting ATPase KdpC subunit (191 aa).

Residues 6–26 (PALVLFILLTLLTGGVYPLLT) traverse the membrane as a helical segment.

This sequence belongs to the KdpC family. The system is composed of three essential subunits: KdpA, KdpB and KdpC.

It localises to the cell inner membrane. Functionally, part of the high-affinity ATP-driven potassium transport (or Kdp) system, which catalyzes the hydrolysis of ATP coupled with the electrogenic transport of potassium into the cytoplasm. This subunit acts as a catalytic chaperone that increases the ATP-binding affinity of the ATP-hydrolyzing subunit KdpB by the formation of a transient KdpB/KdpC/ATP ternary complex. The chain is Potassium-transporting ATPase KdpC subunit from Klebsiella pneumoniae (strain 342).